Consider the following 434-residue polypeptide: GTPase Der (434 aa).

2 consecutive EngA-type G domains span residues 3 to 167 and 175 to 350; these read NIVA…PEIE and PRFA…ESRS. GTP-binding positions include 9-16, 56-60, 119-122, 181-188, 228-232, and 293-296; these read GRPNVGKS, DTGGY, NKVD, GRPNAGKS, DTAGI, and NKWD. Residues 351–434 form the KH-like domain; sequence KKIKTRQFND…VPISIFFRKK (84 aa).

This sequence belongs to the TRAFAC class TrmE-Era-EngA-EngB-Septin-like GTPase superfamily. EngA (Der) GTPase family. In terms of assembly, associates with the 50S ribosomal subunit.

Functionally, GTPase that plays an essential role in the late steps of ribosome biogenesis. This is GTPase Der from Christiangramia forsetii (strain DSM 17595 / CGMCC 1.15422 / KT0803) (Gramella forsetii).